We begin with the raw amino-acid sequence, 555 residues long: Solute carrier family 22 member 2 (555 aa).

Residues 1–21 (MSTVDDILEHIGEFHLFQKQT) are Cytoplasmic-facing. The helical transmembrane segment at 22–42 (FFLLALLSGAFTPIYVGIVFL) threads the bilayer. At 43–150 (GFTPDHHCWS…LVCAHSWMLD (108 aa)) the chain is on the extracellular side. A glycan (N-linked (GlcNAc...) asparagine) is linked at Asn-71. The helical transmembrane segment at 151–171 (LFQSVVNVGFFIGAMMIGYLA) threads the bilayer. Over 172-177 (DRFGRK) the chain is Cytoplasmic. The chain crosses the membrane as a helical span at residues 178–198 (FCLLVTILINAISGALMAISP). Residues 199 to 210 (NYAWMLVFRFLQ) lie on the Extracellular side of the membrane. The chain crosses the membrane as a helical span at residues 211–231 (GLVSKAGWLIGYILITEFVGL). The Cytoplasmic segment spans residues 232–238 (GYRRMVG). Residues 239–259 (ICYQIAFTVGLLILAGVAYVI) form a helical membrane-spanning segment. The Extracellular portion of the chain corresponds to 260–263 (PNWR). The chain crosses the membrane as a helical span at residues 264-284 (WLQFAVTLPNFCFLLYFWCIP). The Proline-rich sequence motif lies at 284 to 288 (PESPR). The Cytoplasmic segment spans residues 285-348 (ESPRWLISQN…VRTPQIRKHT (64 aa)). A helical membrane pass occupies residues 349 to 369 (LILMYNWFTSSVLYQGLIMHM). The Extracellular portion of the chain corresponds to 370-375 (GLAGDN). The chain crosses the membrane as a helical span at residues 376 to 396 (IYLDFFYSALVEFPAAFIIIL). At 397–404 (TIDRVGRR) the chain is on the cytoplasmic side. Residues 405-425 (YPWAVSNMVAGAACLASVFIP) traverse the membrane as a helical segment. Over 426–432 (DDLQWLK) the chain is Extracellular. A helical membrane pass occupies residues 433 to 453 (ITIACLGRMGITMAYEMVCLV). Residues 454–464 (NAELYPTYIRN) lie on the Cytoplasmic side of the membrane. The helical transmembrane segment at 465–485 (LGVLVCSSMCDIGGIITPFLV) threads the bilayer. Topologically, residues 486–494 (YRLTDIWME) are extracellular. A helical transmembrane segment spans residues 495–515 (FPLVVFAVVGLVAGALVLLLP). Residues 516–555 (ETKGKALPETIEDAENMQRPRKKKEKRIYLQVKQADRPLS) are Cytoplasmic-facing.

It belongs to the major facilitator (TC 2.A.1) superfamily. Organic cation transporter (TC 2.A.1.19) family. In terms of processing, tyrosine phosphorylated. As to expression, expressed in the kidney, in the proximal tubules of cortex and of the outer medulla. In brain, highly expressed predominantly in regions located at the brain-cerebrospinal fluid border, in the leptomeninges, in the choroid plexus and in a layer boarding the third ventricle. In brain, also observed in the granular cell layer of the cerebellum and in the granular layer and pyramidal cells of the hippocampus in the CA1-CA3 regions. Expressed in tracheal and bronchial ciliated epithelium in the respiratory tract. Expression is greater in the kidney of male than of female.

The protein resides in the basolateral cell membrane. The protein localises to the basal cell membrane. It is found in the apical cell membrane. It carries out the reaction (R)-noradrenaline(out) = (R)-noradrenaline(in). The catalysed reaction is (R)-adrenaline(out) = (R)-adrenaline(in). It catalyses the reaction serotonin(out) = serotonin(in). The enzyme catalyses dopamine(out) = dopamine(in). It carries out the reaction histamine(out) = histamine(in). The catalysed reaction is thiamine(in) = thiamine(out). It catalyses the reaction creatinine(in) = creatinine(out). The enzyme catalyses 1-methylnicotinamide(out) = 1-methylnicotinamide(in). It carries out the reaction guanidine(out) = guanidine(in). The catalysed reaction is choline(out) = choline(in). It catalyses the reaction agmatine(out) = agmatine(in). The enzyme catalyses putrescine(out) = putrescine(in). It carries out the reaction spermidine(in) = spermidine(out). The catalysed reaction is tyramine(in) = tyramine(out). It catalyses the reaction L-histidyl-L-proline diketopiperazine(in) = L-histidyl-L-proline diketopiperazine(out). The enzyme catalyses (R)-salsolinol(in) = (R)-salsolinol(out). It carries out the reaction N-methyl-(R)-salsolinol(in) = N-methyl-(R)-salsolinol(out). The catalysed reaction is acetylcholine(in) = acetylcholine(out). It catalyses the reaction prostaglandin F2alpha(out) = prostaglandin F2alpha(in). The enzyme catalyses prostaglandin E2(out) = prostaglandin E2(in). Tyrosine phosphorylation of the transporter leads to activation of the transport activity. Inhibited by cGMP, most likely through a cGMP-binding protein that interacts with OCT2. In terms of biological role, electrogenic voltage-dependent transporter that mediates the transport of a variety of organic cations such as endogenous bioactive amines, cationic drugs and xenobiotics. Functions as a Na(+)-independent, bidirectional uniporter. Cation cellular uptake or release is driven by the electrochemical potential, i.e. membrane potential and concentration gradient. However, may also engage electroneutral cation exchange when saturating concentrations of cation substrates are reached. Predominantly expressed at the basolateral membrane of hepatocytes and proximal tubules and involved in the uptake and disposition of cationic compounds by hepatic and renal clearance from the blood flow. Implicated in monoamine neurotransmitters uptake such as histamine, dopamine, adrenaline/epinephrine, noradrenaline/norepinephrine, serotonin and tyramine, thereby supporting a physiological role in the central nervous system by regulating interstitial concentrations of neurotransmitters. Also capable of transporting dopaminergic neuromodulators cyclo(his-pro), salsolinol and N-methyl-salsolinol, thereby involved in the maintenance of dopaminergic cell integrity in the central nervous system. Mediates the bidirectional transport of acetylcholine (ACh) at the apical membrane of ciliated cell in airway epithelium, thereby playing a role in luminal release of ACh from bronchial epithelium. Also transports guanidine and endogenous monoamines such as vitamin B1/thiamine, creatinine and N-1-methylnicotinamide (NMN). Mediates the uptake and efflux of quaternary ammonium compound choline. Mediates the bidirectional transport of polyamine agmatine and the uptake of polyamine putrescine. Able to transport non-amine endogenous compounds such as prostaglandin E2 (PGE2) and prostaglandin F2-alpha (PGF2-alpha). Also involved in the uptake of xenobiotic 4-(4-(dimethylamino)styryl)-N-methylpyridinium (ASP). May contribute to regulate the transport of organic compounds in testis across the blood-testis-barrier. The chain is Solute carrier family 22 member 2 from Rattus norvegicus (Rat).